The primary structure comprises 565 residues: Adenine deaminase (565 aa).

It belongs to the metallo-dependent hydrolases superfamily. Adenine deaminase family. Requires Mn(2+) as cofactor.

It carries out the reaction adenine + H2O + H(+) = hypoxanthine + NH4(+). The protein is Adenine deaminase of Sinorhizobium fredii (strain NBRC 101917 / NGR234).